The chain runs to 297 residues: Leucine-rich repeat-containing protein 25 (297 aa).

The signal sequence occupies residues 1 to 25 (MGSIRTRLLWLCLLMLLALLHKSGS). The Extracellular segment spans residues 26–169 (QDLTCMVHPS…SCPPSWGPGT (144 aa)). N-linked (GlcNAc...) asparagine glycosylation is found at asparagine 44 and asparagine 49. 2 LRR repeats span residues 66–89 (HAQVLDLSKNGLQVLPGAFFDKLE) and 90–113 (KLQTLIVTHNQLDSVDRSLALRCD). 2 N-linked (GlcNAc...) asparagine glycosylation sites follow: asparagine 133 and asparagine 152. Residues 170–190 (IGALVAGTISLAVAVSGSVLA) traverse the membrane as a helical segment. The Cytoplasmic segment spans residues 191–297 (WRLLRRRRRA…VYCNLESLGR (107 aa)). The interval 202–244 (EHSLSKAQMSPHDIPKPVTDFLPRYSSRRPGPKAPDSPPSRFT) is disordered. Serine 211, serine 238, and serine 267 each carry phosphoserine. Tyrosine 289 carries the post-translational modification Phosphotyrosine.

As to quaternary structure, interacts with RIGI. Interacts with SQSTM1. Interacts with p65/RELA; this interaction promotes the degradation of RELA through autophagy.

The protein resides in the membrane. It is found in the cytoplasm. Plays a role in the inhibition of RLR-mediated type I interferon signaling pathway by targeting RIGI for autophagic degradation. Interacts specifically with ISG15-associated RIGI to promote interaction between RIGI and the autophagic cargo receptor p62/SQSTM1 to mediate RIGI degradation via selective autophagy. Plays also a role in the inhibition of NF-kappa-B signaling pathway and inflammatory response by promoting the degradation of p65/RELA. This is Leucine-rich repeat-containing protein 25 (Lrrc25) from Mus musculus (Mouse).